The primary structure comprises 269 residues: DNA-binding protein RFXANK (269 aa).

Residues 1 to 36 (MEPTQVAENLVPNQQPPVPDLEDPEDTRDESPENSD) are disordered. ANK repeat units follow at residues 88-127 (LDSLSIHQLAAQGELSQLKDHLRKGACPACTCLSGNNLIN), 132-161 (RGFTPLIWASAFGEIETVRFLLDWGADPHI), 165-194 (ERESALSLASMGGYTDIVRLLLDRDVDINI), 198-227 (NGGTPLLYAVRGNHVKCVEALLARGADLTT), and 231-260 (SGYTPMDLAVALGYRKVQQVMESHILRLFQ).

In terms of assembly, forms homodimers. The RFX heterotetrameric complex consists of 2 molecules of RFX5 and one each of RFXAP and RFX-B/RFXANK; with each subunit representing a separate complementation group. Interacts (via ankyrin repeats) with RFX5 (via PxLPxI/L motif); the interaction is direct. RFX forms cooperative DNA binding complexes with X2BP and CBF/NF-Y. RFX associates with CIITA to form an active transcriptional complex. Interacts with RAF1. Interacts with RFX7. In terms of processing, phosphorylated by RAF1. In terms of tissue distribution, expressed primarily in thymus, lung and testis.

The protein resides in the cytoplasm. Its subcellular location is the nucleus. Activates transcription from class II MHC promoters. Activation requires the activity of the MHC class II transactivator/CIITA. May regulate other genes in the cell. RFX binds the X1 box of MHC-II promoters. May also potentiate the activation of RAF1. This chain is DNA-binding protein RFXANK (Rfxank), found in Mus musculus (Mouse).